Here is a 321-residue protein sequence, read N- to C-terminus: 37 kDa cell surface protein (321 aa).

It localises to the secreted. The protein resides in the cell wall. This chain is 37 kDa cell surface protein (CSP37), found in Candida albicans (Yeast).